The primary structure comprises 326 residues: Bifunctional pinoresinol-lariciresinol reductase (326 aa).

NADP(+)-binding positions include 25–31 (GGTGYLG), R50, and K59. The active-site Proton acceptor is K153. R157 serves as a coordination point for NADP(+). Residue H285 participates in substrate binding.

The protein belongs to the NmrA-type oxidoreductase family. Isoflavone reductase subfamily. In terms of assembly, dimer.

The catalysed reaction is (+)-lariciresinol + NADP(+) = (+)-pinoresinol + NADPH + H(+). It catalyses the reaction (-)-secoisolariciresinol + NADP(+) = (+)-lariciresinol + NADPH + H(+). Reductase involved in lignan biosynthesis. Catalyzes the enantioselective conversion of (+)-pinoresinol into (+)-lariciresinol and of (+)-lariciresinol into (-)-secoisolariciresinol. Abstracts the 4R-hydride from the NADPH cofactor during catalysis. This chain is Bifunctional pinoresinol-lariciresinol reductase (PLR1), found in Linum album (Flax).